Reading from the N-terminus, the 705-residue chain is Polyribonucleotide nucleotidyltransferase (705 aa).

Residues D485 and D491 each contribute to the Mg(2+) site. The 60-residue stretch at 552-611 (PRVYTMTIAPEKIRDVIGAGGKTINKIIGETGVQIDIKEDGKIYVMSSDSVGANRALKMI) folds into the KH domain. The S1 motif domain maps to 621-689 (GEIYLGKVTR…DQGRINLSRR (69 aa)).

It belongs to the polyribonucleotide nucleotidyltransferase family. Requires Mg(2+) as cofactor.

The protein resides in the cytoplasm. It catalyses the reaction RNA(n+1) + phosphate = RNA(n) + a ribonucleoside 5'-diphosphate. Involved in mRNA degradation. Catalyzes the phosphorolysis of single-stranded polyribonucleotides processively in the 3'- to 5'-direction. This is Polyribonucleotide nucleotidyltransferase from Clostridium tetani (strain Massachusetts / E88).